The following is a 77-amino-acid chain: NAD(P)H-quinone oxidoreductase subunit L (77 aa).

The next 2 helical transmembrane spans lie at 12–32 and 47–67; these read LIAYMGVITIYLLVIPLLLFY and LGIYGLVFLFFPGLILFSPFL.

Belongs to the complex I NdhL subunit family. In terms of assembly, NDH-1 can be composed of about 15 different subunits; different subcomplexes with different compositions have been identified which probably have different functions.

It is found in the cellular thylakoid membrane. The enzyme catalyses a plastoquinone + NADH + (n+1) H(+)(in) = a plastoquinol + NAD(+) + n H(+)(out). The catalysed reaction is a plastoquinone + NADPH + (n+1) H(+)(in) = a plastoquinol + NADP(+) + n H(+)(out). NDH-1 shuttles electrons from an unknown electron donor, via FMN and iron-sulfur (Fe-S) centers, to quinones in the respiratory and/or the photosynthetic chain. The immediate electron acceptor for the enzyme in this species is believed to be plastoquinone. Couples the redox reaction to proton translocation, and thus conserves the redox energy in a proton gradient. Cyanobacterial NDH-1 also plays a role in inorganic carbon-concentration. The sequence is that of NAD(P)H-quinone oxidoreductase subunit L from Prochlorococcus marinus (strain MIT 9312).